Consider the following 67-residue polypeptide: ATP synthase F(0) complex subunit 8 (67 aa).

Residues 8-24 form a helical membrane-spanning segment; that stretch reads TWFITIVSMLLSLFILM. Lys-54 bears the N6-acetyllysine; alternate mark. Residue Lys-54 is modified to N6-succinyllysine; alternate. Lys-57 bears the N6-acetyllysine mark.

It belongs to the ATPase protein 8 family. As to quaternary structure, component of the ATP synthase complex composed at least of ATP5F1A/subunit alpha, ATP5F1B/subunit beta, ATP5MC1/subunit c (homooctomer), MT-ATP6/subunit a, MT-ATP8/subunit 8, ATP5ME/subunit e, ATP5MF/subunit f, ATP5MG/subunit g, ATP5MK/subunit k, ATP5MJ/subunit j, ATP5F1C/subunit gamma, ATP5F1D/subunit delta, ATP5F1E/subunit epsilon, ATP5PF/subunit F6, ATP5PB/subunit b, ATP5PD/subunit d, ATP5PO/subunit OSCP. ATP synthase complex consists of a soluble F(1) head domain (subunits alpha(3) and beta(3)) - the catalytic core - and a membrane F(0) domain - the membrane proton channel (subunits c, a, 8, e, f, g, k and j). These two domains are linked by a central stalk (subunits gamma, delta, and epsilon) rotating inside the F1 region and a stationary peripheral stalk (subunits F6, b, d, and OSCP). Interacts with PRICKLE3.

The protein resides in the mitochondrion membrane. Its function is as follows. Subunit 8, of the mitochondrial membrane ATP synthase complex (F(1)F(0) ATP synthase or Complex V) that produces ATP from ADP in the presence of a proton gradient across the membrane which is generated by electron transport complexes of the respiratory chain. ATP synthase complex consist of a soluble F(1) head domain - the catalytic core - and a membrane F(1) domain - the membrane proton channel. These two domains are linked by a central stalk rotating inside the F(1) region and a stationary peripheral stalk. During catalysis, ATP synthesis in the catalytic domain of F(1) is coupled via a rotary mechanism of the central stalk subunits to proton translocation. In vivo, can only synthesize ATP although its ATP hydrolase activity can be activated artificially in vitro. Part of the complex F(0) domain. The chain is ATP synthase F(0) complex subunit 8 from Dasypus novemcinctus (Nine-banded armadillo).